The following is a 231-amino-acid chain: Venom allergen 3 homolog (231 aa).

A signal peptide spans 1–21 (MSSCMLFFTVIIAGVFMGTIA). Cystine bridges form between Cys-25–Cys-40, Cys-30–Cys-124, and Cys-51–Cys-117. Residues 68 to 215 (VTLHNQLRRK…WNQQYLVCNY (148 aa)) enclose the SCP domain. The N-linked (GlcNAc...) asparagine glycan is linked to Asn-145. Cys-196 and Cys-213 are oxidised to a cystine.

Belongs to the CRISP family. Expressed by the venom gland.

The protein localises to the secreted. The sequence is that of Venom allergen 3 homolog from Dinoponera quadriceps (South American ant).